We begin with the raw amino-acid sequence, 126 residues long: Small ribosomal subunit protein uS13 (126 aa).

Residues 94 to 126 form a disordered region; it reads RGLPVHGQRTSTNARTRKGPRRAIAGKKKPGKK. Over residues 108-126 the composition is skewed to basic residues; sequence RTRKGPRRAIAGKKKPGKK.

It belongs to the universal ribosomal protein uS13 family. In terms of assembly, part of the 30S ribosomal subunit. Forms a loose heterodimer with protein S19. Forms two bridges to the 50S subunit in the 70S ribosome.

Its function is as follows. Located at the top of the head of the 30S subunit, it contacts several helices of the 16S rRNA. In the 70S ribosome it contacts the 23S rRNA (bridge B1a) and protein L5 of the 50S subunit (bridge B1b), connecting the 2 subunits; these bridges are implicated in subunit movement. Contacts the tRNAs in the A and P-sites. The protein is Small ribosomal subunit protein uS13 of Streptomyces avermitilis (strain ATCC 31267 / DSM 46492 / JCM 5070 / NBRC 14893 / NCIMB 12804 / NRRL 8165 / MA-4680).